Here is a 254-residue protein sequence, read N- to C-terminus: Probable pectate lyase E (254 aa).

The first 17 residues, 1–17 (MYQPLLLLPLLLTSAFA), serve as a signal peptide directing secretion. Residue N175 is glycosylated (N-linked (GlcNAc...) asparagine). The segment at 227–254 (TDNNDKEPKKKGSGPSNACKYKEPLSKC) is disordered.

The protein belongs to the polysaccharide lyase 3 family. Ca(2+) serves as cofactor.

It localises to the secreted. The enzyme catalyses Eliminative cleavage of (1-&gt;4)-alpha-D-galacturonan to give oligosaccharides with 4-deoxy-alpha-D-galact-4-enuronosyl groups at their non-reducing ends.. Functionally, pectinolytic enzyme consist of four classes of enzymes: pectin lyase, polygalacturonase, pectin methylesterase and rhamnogalacturonase. Among pectinolytic enzymes, pectin lyase is the most important in depolymerization of pectin, since it cleaves internal glycosidic bonds of highly methylated pectins. Favors pectate, the anion, over pectin, the methyl ester. The sequence is that of Probable pectate lyase E (plyE) from Neosartorya fischeri (strain ATCC 1020 / DSM 3700 / CBS 544.65 / FGSC A1164 / JCM 1740 / NRRL 181 / WB 181) (Aspergillus fischerianus).